The following is a 1838-amino-acid chain: Lysine-specific demethylase 5 (1838 aa).

The segment at 1–150 (MSAKTEADNT…SSNKFDQGKN (150 aa)) is disordered. The segment covering 15–31 (SGGGGVGSGTSSGGGAS) has biased composition (gly residues). The span at 45 to 56 (RNSTGNGTNSGS) shows a compositional bias: low complexity. Positions 136–145 (HTQPHSSNKF) are enriched in polar residues. The JmjN domain occupies 161–202 (CPVFRPTTEEFKNPLAYISKIRSIAEKCGIAKILPPATWSPP). The 91-residue stretch at 226–316 (TRVKLNFLDQ…ILHPFEVYTS (91 aa)) folds into the ARID domain. Residues 321–333 (GPTPTSSGSGSTP) are compositionally biased toward low complexity. Disordered stretches follow at residues 321–380 (GPTP…GLSG) and 416–437 (GSPL…KGGE). Thr-323 bears the Phosphothreonine mark. Composition is skewed to polar residues over residues 351–361 (TRQQIAPPNET), 369–380 (FGNSNASCGLSG), and 416–430 (GSPL…TRGA). The PHD-type 1 zinc finger occupies 448–498 (KYICHICNRGDVEESMLLCDGCDDSYHTFCLLPPLTSIPKGEWLCPRCVVE). Residues 591–757 (EYAESSWNLN…MGRECVNHYS (167 aa)) form the JmjC domain. His-637, Asp-640, and His-725 together coordinate Fe cation. Residues 960–1049 (VRTRSDHNQE…LRIELQQLDL (90 aa)) adopt a coiled-coil conformation. The PHD-type 2 zinc-finger motif lies at 1293–1354 (DMFCLCKSEF…KWLCPSCVRS (62 aa)). Residues 1401–1462 (SSPDVSAAQE…SDADDDDDED (62 aa)) are disordered. Positions 1407–1417 (AAQEAIMAQQQ) are enriched in low complexity. Residues Ser-1422 and Ser-1433 each carry the phosphoserine modification. The segment covering 1453–1462 (SDADDDDDED) has biased composition (acidic residues). Ser-1474 bears the Phosphoserine mark. A disordered region spans residues 1548 to 1751 (YMQRQRQQHT…QRSQQAAQED (204 aa)). 5 stretches are compositionally biased toward low complexity: residues 1576-1595 (NSPN…SNSG), 1624-1650 (GKKG…PGAD), 1658-1667 (ANGGNTNSST), 1674-1683 (SATTTPTPGS), and 1692-1736 (STTA…ATGG). Ser-1635 and Ser-1640 each carry phosphoserine. Residues 1753–1808 (EEECRAENCHKPTGREVDWVQCDGGCNEWFHMYCVGLNRSQIKPDDDYICIRCTKT) form a PHD-type 3 zinc finger. A disordered region spans residues 1814–1838 (QGSGHSMSVASTTTPGKQRAVQSAR).

Belongs to the JARID1 histone demethylase family. As to quaternary structure, interacts with Myc. Part of a complex containing Lid, Myc and Ash2. Fe(2+) is required as a cofactor.

It localises to the nucleus. The enzyme catalyses N(6),N(6),N(6)-trimethyl-L-lysyl(4)-[histone H3] + 3 2-oxoglutarate + 3 O2 = L-lysyl(4)-[histone H3] + 3 formaldehyde + 3 succinate + 3 CO2. With respect to regulation, inhibited by Myc. Histone demethylase that specifically demethylates 'Lys-4' of histone H3, thereby playing a central role in histone code. Does not demethylate histone H3 'Lys-9', H3 'Lys-27', H3 'Lys-36', H3 'Lys-79' or H4 'Lys-20'. Specifically demethylates trimethylated H3 'Lys-4'. Required for the correct regulation of homeotic genes during development. Plays a role in the regulation of the circadian rhythm and in maintaining the normal periodicity of the circadian clock. Regulates the expression of clock-controlled genes including tim, per and cry. This is Lysine-specific demethylase 5 from Drosophila melanogaster (Fruit fly).